The primary structure comprises 471 residues: A-type ATP synthase subunit B (471 aa).

This sequence belongs to the ATPase alpha/beta chains family. Has multiple subunits with at least A(3), B(3), C, D, E, F, H, I and proteolipid K(x).

The protein resides in the cell membrane. Its function is as follows. Component of the A-type ATP synthase that produces ATP from ADP in the presence of a proton gradient across the membrane. The B chain is a regulatory subunit. The polypeptide is A-type ATP synthase subunit B (Ignicoccus hospitalis (strain KIN4/I / DSM 18386 / JCM 14125)).